A 357-amino-acid chain; its full sequence is 4-hydroxyphenylpyruvate dioxygenase (357 aa).

VOC domains are found at residues G17 to R137 and Y165 to D316. Residues H168, H246, and E325 each coordinate Fe cation.

It belongs to the 4HPPD family. In terms of assembly, homotetramer. Requires Fe cation as cofactor.

It catalyses the reaction 3-(4-hydroxyphenyl)pyruvate + O2 = homogentisate + CO2. Its pathway is amino-acid degradation; L-phenylalanine degradation; acetoacetate and fumarate from L-phenylalanine: step 3/6. This chain is 4-hydroxyphenylpyruvate dioxygenase (hpd), found in Pseudomonas aeruginosa (strain ATCC 15692 / DSM 22644 / CIP 104116 / JCM 14847 / LMG 12228 / 1C / PRS 101 / PAO1).